The chain runs to 154 residues: Mating pheromone 2 (154 aa).

The N-terminal stretch at 1-16 (MKAIFIILAILMVTQA) is a signal peptide. A propeptide spanning residues 17-52 (FKMTSKVNTKLQSQIQSKFQSKNKLASTFQTSSQLK) is cleaved from the precursor.

The protein localises to the secreted. Mating ciliate pheromones (or gamones) are diffusible extracellular communication signals that distinguish different intraspecific classes of cells commonly referred to as 'mating types'. They prepare the latter for conjugation by changing their cell surface properties. This is Mating pheromone 2 from Euplotoides octocarinatus (Freshwater ciliate).